The sequence spans 279 residues: Bifunctional protein FolD (279 aa).

NADP(+) is bound by residues 166–168 (GRS) and S191.

This sequence belongs to the tetrahydrofolate dehydrogenase/cyclohydrolase family. Homodimer.

It carries out the reaction (6R)-5,10-methylene-5,6,7,8-tetrahydrofolate + NADP(+) = (6R)-5,10-methenyltetrahydrofolate + NADPH. The catalysed reaction is (6R)-5,10-methenyltetrahydrofolate + H2O = (6R)-10-formyltetrahydrofolate + H(+). The protein operates within one-carbon metabolism; tetrahydrofolate interconversion. In terms of biological role, catalyzes the oxidation of 5,10-methylenetetrahydrofolate to 5,10-methenyltetrahydrofolate and then the hydrolysis of 5,10-methenyltetrahydrofolate to 10-formyltetrahydrofolate. The chain is Bifunctional protein FolD from Shouchella clausii (strain KSM-K16) (Alkalihalobacillus clausii).